The primary structure comprises 415 residues: Multidrug resistance protein MdtA (415 aa).

Residues 1–21 (MKGSYKSRWVIVIVVVIAAIA) form the signal peptide. 2 disordered regions span residues 32–59 (SRSA…SGPL) and 392–415 (EAQS…GARS). The segment covering 399-415 (SEEKATSREYAKKGARS) has biased composition (basic and acidic residues).

This sequence belongs to the membrane fusion protein (MFP) (TC 8.A.1) family. Part of a tripartite efflux system composed of MdtA, MdtB and MdtC.

Its subcellular location is the cell inner membrane. In terms of biological role, the MdtABC tripartite complex confers resistance against novobiocin and deoxycholate. The chain is Multidrug resistance protein MdtA from Escherichia coli O17:K52:H18 (strain UMN026 / ExPEC).